A 226-amino-acid polypeptide reads, in one-letter code: Probable chemoreceptor glutamine deamidase CheD (226 aa).

Belongs to the CheD family.

The enzyme catalyses L-glutaminyl-[protein] + H2O = L-glutamyl-[protein] + NH4(+). In terms of biological role, probably deamidates glutamine residues to glutamate on methyl-accepting chemotaxis receptors (MCPs), playing an important role in chemotaxis. The sequence is that of Probable chemoreceptor glutamine deamidase CheD from Bordetella avium (strain 197N).